A 376-amino-acid polypeptide reads, in one-letter code: UDP-N-acetylglucosamine--N-acetylmuramyl-(pentapeptide) pyrophosphoryl-undecaprenol N-acetylglucosamine transferase (376 aa).

Residues Thr12 to Gly14, Asn125, Arg165, Ser197, and Gln296 contribute to the UDP-N-acetyl-alpha-D-glucosamine site.

It belongs to the glycosyltransferase 28 family. MurG subfamily.

It is found in the cell inner membrane. It catalyses the reaction di-trans,octa-cis-undecaprenyl diphospho-N-acetyl-alpha-D-muramoyl-L-alanyl-D-glutamyl-meso-2,6-diaminopimeloyl-D-alanyl-D-alanine + UDP-N-acetyl-alpha-D-glucosamine = di-trans,octa-cis-undecaprenyl diphospho-[N-acetyl-alpha-D-glucosaminyl-(1-&gt;4)]-N-acetyl-alpha-D-muramoyl-L-alanyl-D-glutamyl-meso-2,6-diaminopimeloyl-D-alanyl-D-alanine + UDP + H(+). The protein operates within cell wall biogenesis; peptidoglycan biosynthesis. Its function is as follows. Cell wall formation. Catalyzes the transfer of a GlcNAc subunit on undecaprenyl-pyrophosphoryl-MurNAc-pentapeptide (lipid intermediate I) to form undecaprenyl-pyrophosphoryl-MurNAc-(pentapeptide)GlcNAc (lipid intermediate II). The sequence is that of UDP-N-acetylglucosamine--N-acetylmuramyl-(pentapeptide) pyrophosphoryl-undecaprenol N-acetylglucosamine transferase from Protochlamydia amoebophila (strain UWE25).